We begin with the raw amino-acid sequence, 359 residues long: Membrane-bound lytic murein transglycosylase C (359 aa).

The first 16 residues, 1 to 16 (MKKYLALALIAPLLIS), serve as a signal peptide directing secretion. The N-palmitoyl cysteine moiety is linked to residue Cys-17. Cys-17 carries S-diacylglycerol cysteine lipidation.

The protein belongs to the transglycosylase Slt family.

The protein resides in the cell outer membrane. It carries out the reaction Exolytic cleavage of the (1-&gt;4)-beta-glycosidic linkage between N-acetylmuramic acid (MurNAc) and N-acetylglucosamine (GlcNAc) residues in peptidoglycan, from either the reducing or the non-reducing ends of the peptidoglycan chains, with concomitant formation of a 1,6-anhydrobond in the MurNAc residue.. Its function is as follows. Murein-degrading enzyme. May play a role in recycling of muropeptides during cell elongation and/or cell division. The protein is Membrane-bound lytic murein transglycosylase C of Shigella dysenteriae serotype 1 (strain Sd197).